The following is a 279-amino-acid chain: Tryptophan 2,3-dioxygenase (279 aa).

Residues 48–52 (FIIQH), Y110, and R114 each bind substrate. A heme-binding site is contributed by H237. T251 is a binding site for substrate.

Belongs to the tryptophan 2,3-dioxygenase family. In terms of assembly, homotetramer. Heme is required as a cofactor.

It carries out the reaction L-tryptophan + O2 = N-formyl-L-kynurenine. The protein operates within amino-acid degradation; L-tryptophan degradation via kynurenine pathway; L-kynurenine from L-tryptophan: step 1/2. Functionally, heme-dependent dioxygenase that catalyzes the oxidative cleavage of the L-tryptophan (L-Trp) pyrrole ring and converts L-tryptophan to N-formyl-L-kynurenine. Catalyzes the oxidative cleavage of the indole moiety. The sequence is that of Tryptophan 2,3-dioxygenase from Bradyrhizobium diazoefficiens (strain JCM 10833 / BCRC 13528 / IAM 13628 / NBRC 14792 / USDA 110).